A 140-amino-acid chain; its full sequence is Small ribosomal subunit protein uS12 (140 aa).

The interval 33–55 is disordered; the sequence is KEQTNVSSPQKRGVCTRVGTMTP.

Belongs to the universal ribosomal protein uS12 family. Part of the 30S ribosomal subunit. Contacts proteins S8 and S17. May interact with IF1 in the 30S initiation complex.

Its function is as follows. With S4 and S5 plays an important role in translational accuracy. Interacts with and stabilizes bases of the 16S rRNA that are involved in tRNA selection in the A site and with the mRNA backbone. Located at the interface of the 30S and 50S subunits, it traverses the body of the 30S subunit contacting proteins on the other side and probably holding the rRNA structure together. The combined cluster of proteins S8, S12 and S17 appears to hold together the shoulder and platform of the 30S subunit. The polypeptide is Small ribosomal subunit protein uS12 (Geobacillus kaustophilus (strain HTA426)).